The sequence spans 428 residues: L-gulono-1,4-lactone dehydrogenase (428 aa).

The region spanning 12 to 179 is the FAD-binding PCMH-type domain; sequence QVCAPSAIVR…SQVTLQTVPL (168 aa).

The protein belongs to the oxygen-dependent FAD-linked oxidoreductase family. A divalent metal cation is required as a cofactor.

The catalysed reaction is L-gulono-1,4-lactone + 2 Fe(III)-[cytochrome c] = L-ascorbate + 2 Fe(II)-[cytochrome c] + 3 H(+). It functions in the pathway cofactor biosynthesis; L-ascorbate biosynthesis. Functionally, oxidizes L-gulono-1,4-lactone to L-xylo-hexulonolactone which spontaneously isomerizes to L-ascorbate. The protein is L-gulono-1,4-lactone dehydrogenase of Mycobacterium tuberculosis (strain CDC 1551 / Oshkosh).